The following is a 3660-amino-acid chain: Dystrophin (3660 aa).

The tract at residues 1–244 is actin-binding; that stretch reads MSAHVLWYEE…YVTSLFQVLP (244 aa). 2 Calponin-homology (CH) domains span residues 19-123 and 138-244; these read DVQK…LHWQ and TNSE…QVLP. Spectrin repeat units lie at residues 341–449, 450–558, 561–669, 721–830, 832–936, 945–1047, 1050–1156, 1159–1265, 1268–1369, 1470–1570, 1573–1678, 1681–1782, 1879–1981, 2013–2103, 2106–2211, 2214–2321, 2472–2574, 2577–2683, 2686–2799, 2802–2904, 2906–2928, and 2931–3037; these read MDLD…NLHK, ILMD…LLQD, RKWQ…QVSQ, EIRK…WLEY, NSII…QLQT, RYKD…KLED, TKLQ…ALKG, DKTV…TLEE, ACWH…SLEQ, EQRL…ELEK, KLSR…LLME, KHME…FIPL, HQWY…TVLE, LSEV…RFDK, EKWR…RIEE, NILS…EIEI, FNKA…QLHE, KDST…ALES, LMLQ…HLEA, DQWK…LRRQ, DDVR…KIDD, and ERLQ…QLHE. The 34-residue stretch at 3052 to 3085 folds into the WW domain; that stretch reads TSVQGPWERAISPNKVPYYINHETQTTCWDHPKM. The ZZ-type; degenerate zinc finger occupies 3305–3361; it reads KHQAKCNICKECPIIGFRYRSLKHFNYDICQSCFFSGRVAKGHKMHYPMVEYCTPTT. C3310, C3313, C3334, and C3337 together coordinate Zn(2+). Disordered stretches follow at residues 3503–3526 and 3575–3660; these read KQQH…VSPQ and PQAD…EATM. Composition is skewed to polar residues over residues 3582–3601 and 3637–3647; these read NGTT…SSQP and QLNNSFPSSRG.

The protein localises to the cell membrane. The protein resides in the sarcolemma. Its subcellular location is the cytoplasm. It is found in the cytoskeleton. It localises to the postsynaptic cell membrane. Its function is as follows. May play a role in anchoring the cytoskeleton to the plasma membrane. In Gallus gallus (Chicken), this protein is Dystrophin (DMD).